The primary structure comprises 809 residues: Leucine--tRNA ligase (809 aa).

The short motif at 40–50 (PYPSGRIHMGH) is the 'HIGH' region element. The short motif at 579-583 (KMSKS) is the 'KMSKS' region element. Lysine 582 is an ATP binding site.

It belongs to the class-I aminoacyl-tRNA synthetase family.

The protein resides in the cytoplasm. It carries out the reaction tRNA(Leu) + L-leucine + ATP = L-leucyl-tRNA(Leu) + AMP + diphosphate. This Campylobacter jejuni subsp. doylei (strain ATCC BAA-1458 / RM4099 / 269.97) protein is Leucine--tRNA ligase.